Here is a 444-residue protein sequence, read N- to C-terminus: Enolase (444 aa).

The substrate site is built by His-163 and Glu-172. Catalysis depends on Glu-215, which acts as the Proton donor. The Mg(2+) site is built by Asp-250, Glu-300, and Asp-327. Substrate contacts are provided by Glu-300 and Asp-327. Lys-352 acts as the Proton acceptor in catalysis. Substrate is bound by residues 379-382 (SHRS) and Lys-403.

This sequence belongs to the enolase family. In terms of assembly, homodimer. It depends on Mg(2+) as a cofactor.

The protein localises to the cytoplasm. It catalyses the reaction (2R)-2-phosphoglycerate = phosphoenolpyruvate + H2O. Its pathway is carbohydrate degradation; glycolysis; pyruvate from D-glyceraldehyde 3-phosphate: step 4/5. In Solanum lycopersicum (Tomato), this protein is Enolase (PGH1).